Reading from the N-terminus, the 413-residue chain is Histidine--tRNA ligase (413 aa).

The protein belongs to the class-II aminoacyl-tRNA synthetase family. In terms of assembly, homodimer.

It is found in the cytoplasm. The catalysed reaction is tRNA(His) + L-histidine + ATP = L-histidyl-tRNA(His) + AMP + diphosphate + H(+). This is Histidine--tRNA ligase from Ehrlichia chaffeensis (strain ATCC CRL-10679 / Arkansas).